The sequence spans 203 residues: Glycerol-3-phosphate acyltransferase (203 aa).

The next 4 helical transmembrane spans lie at 6 to 26, 82 to 102, 118 to 138, and 141 to 161; these read LTLL…AVLV, AISL…PIFF, APIG…LVLI, and YSSL…WWLD.

The protein belongs to the PlsY family. In terms of assembly, probably interacts with PlsX.

Its subcellular location is the cell inner membrane. It carries out the reaction an acyl phosphate + sn-glycerol 3-phosphate = a 1-acyl-sn-glycero-3-phosphate + phosphate. Its pathway is lipid metabolism; phospholipid metabolism. Its function is as follows. Catalyzes the transfer of an acyl group from acyl-phosphate (acyl-PO(4)) to glycerol-3-phosphate (G3P) to form lysophosphatidic acid (LPA). This enzyme utilizes acyl-phosphate as fatty acyl donor, but not acyl-CoA or acyl-ACP. The protein is Glycerol-3-phosphate acyltransferase of Shewanella sp. (strain MR-7).